The sequence spans 186 residues: Early nodulin-like protein 13 (186 aa).

The first 23 residues, 1–23 (MAQRTLVATFFLIFFLLTNLVCS), serve as a signal peptide directing secretion. Residues 24–128 (KEIIVGGKTS…GEKLHIVVMS (105 aa)) form the Phytocyanin domain. A disulfide bridge links Cys82 with Cys116. Asn83 and Asn90 each carry an N-linked (GlcNAc...) asparagine glycan. A lipid anchor (GPI-anchor amidated alanine) is attached at Ala165. Residues 166–186 (SSLTRQVGVLGFVGLLAIVLL) constitute a propeptide, removed in mature form.

It belongs to the early nodulin-like (ENODL) family. As to expression, mostly expressed in seedlings, siliques and flowers, and, to a lower extent, in roots, stems and seeds, but barely in leaves.

It localises to the cell membrane. In terms of biological role, may act as a carbohydrate transporter. Required, together with ENODL11, ENODL12, ENODL13, ENODL14 and ENODL15, for male-female communication and pollen tube reception and burst at the synergid cell surface of the female gametophyte. In Arabidopsis thaliana (Mouse-ear cress), this protein is Early nodulin-like protein 13.